Reading from the N-terminus, the 414-residue chain is Alanine--glyoxylate aminotransferase (414 aa).

The transit peptide at 1–23 directs the protein to the mitochondrion; sequence MFQALAKASAALGPRAAGWVRTM. K231 carries the post-translational modification N6-(pyridoxal phosphate)lysine. N6-acetyllysine is present on residues K256 and K334. R382 is a binding site for substrate.

It belongs to the class-V pyridoxal-phosphate-dependent aminotransferase family. In terms of assembly, homodimer. Pyridoxal 5'-phosphate is required as a cofactor.

The protein localises to the peroxisome. Its subcellular location is the mitochondrion matrix. It catalyses the reaction L-serine + pyruvate = 3-hydroxypyruvate + L-alanine. The enzyme catalyses glyoxylate + L-alanine = glycine + pyruvate. Its function is as follows. Catalyzes the transamination of glyoxylate to glycine and contributes to the glyoxylate detoxification. Catalyzes the transamination between L-serine and pyruvate and weakly contributes to gluconeogenesis from the L-serine metabolism. The sequence is that of Alanine--glyoxylate aminotransferase from Callithrix jacchus (White-tufted-ear marmoset).